A 501-amino-acid polypeptide reads, in one-letter code: 7-alpha-hydroxycholest-4-en-3-one 12-alpha-hydroxylase (501 aa).

Residues methionine 1–leucine 21 form a helical membrane-spanning segment. Serine 326 is modified (phosphoserine). Residue cysteine 440 coordinates heme.

This sequence belongs to the cytochrome P450 family. Heme is required as a cofactor. As to expression, liver.

It is found in the endoplasmic reticulum membrane. It localises to the microsome membrane. It catalyses the reaction 7alpha-hydroxycholest-4-en-3-one + reduced [NADPH--hemoprotein reductase] + O2 = 7alpha,12alpha-dihydroxycholest-4-en-3-one + oxidized [NADPH--hemoprotein reductase] + H2O + H(+). The enzyme catalyses 5beta-cholestane-3alpha,7alpha-diol + reduced [NADPH--hemoprotein reductase] + O2 = 5beta-cholestane-3alpha,7alpha,12alpha-triol + oxidized [NADPH--hemoprotein reductase] + H2O + H(+). It carries out the reaction chenodeoxycholate + reduced [NADPH--hemoprotein reductase] + O2 = cholate + oxidized [NADPH--hemoprotein reductase] + H2O + H(+). It participates in lipid metabolism; bile acid biosynthesis. A cytochrome P450 monooxygenase involved in primary bile acid biosynthesis. Catalyzes the 12alpha-hydroxylation of 7alpha-hydroxy-4-cholesten-3-one, an intermediate metabolite in cholic acid biosynthesis. Controls biliary balance of cholic acid and chenodeoxycholic acid, ultimately regulating the intestinal absorption of dietary lipids. Mechanistically, uses molecular oxygen inserting one oxygen atom into a substrate, and reducing the second into a water molecule, with two electrons provided by NADPH via cytochrome P450 reductase (CPR; NADPH--hemoprotein reductase). This chain is 7-alpha-hydroxycholest-4-en-3-one 12-alpha-hydroxylase, found in Homo sapiens (Human).